Here is a 231-residue protein sequence, read N- to C-terminus: Large ribosomal subunit protein uL1 (231 aa).

It belongs to the universal ribosomal protein uL1 family. In terms of assembly, part of the 50S ribosomal subunit.

Binds directly to 23S rRNA. The L1 stalk is quite mobile in the ribosome, and is involved in E site tRNA release. Functionally, protein L1 is also a translational repressor protein, it controls the translation of the L11 operon by binding to its mRNA. This is Large ribosomal subunit protein uL1 from Chromobacterium violaceum (strain ATCC 12472 / DSM 30191 / JCM 1249 / CCUG 213 / NBRC 12614 / NCIMB 9131 / NCTC 9757 / MK).